The primary structure comprises 211 residues: Protein 33K (211 aa).

Disordered regions lie at residues 1 to 95 and 107 to 140; these read MPPK…PCSL and AGSP…QDSP. Over residues 24-65 the composition is skewed to acidic residues; sequence DEEETWDDSQAEEVSDEEAEEQMESWDSLDEEDLEDVEEETI. Residues 83-92 show a composition bias toward pro residues; the sequence is KTIPPLPPQP. The segment covering 129–140 has biased composition (polar residues); the sequence is TSSAIATRQDSP. The necessary for nuclear subcellular location stretch occupies residues 154 to 181; it reads YAIFQQSRGQQLELKVKNRSLRSLTRSC. An RS-repeat; required for splicing enhancer activity region spans residues 160 to 180; it reads SRGQQLELKVKNRSLRSLTRS.

The protein belongs to the adenoviridae splicing factor family. Homooligomer. Interacts with DBP; this interaction occurs at a unique vertex during genome packaging. Interacts with IVa2; this interaction occurs at a unique vertex during genome packaging and seems to potentiate IVa2 and 33K oligomerization. Post-translationally, phosphorylated in vitro by human PKA and PRKDC. PRKDC inhibits, whereas PKA activates the splicing factor.

The protein localises to the host nucleus. Promotes alternative splicing of late transcripts by promoting splicing at weak 3' splice sites. Required for the temporal activation of major late pre-mRNA splicing at late times of infection. Induces the splicing and expression of the late capsid vertex protein. Functionally, probably functions as the small terminase that is part of the molecular motor that translocates genomic DNA in empty capsid during DNA packaging. This motor is located at a unique vertex and comprises at least the IVa2 ATPase, the small terminase 33K and probably a portal. Forms a ring-like structure of about 17 nm in which genomic DNA is translocated into the capsid. Stimulates IVa2 ATPase activity in the presence of the viral genome. Once the DNA is packaged, the terminase detaches: the 33K protein is present in the empty particles, but not in the mature virions. Also involved in virion assembly. This Human adenovirus F serotype 40 (HAdV-40) protein is Protein 33K.